The primary structure comprises 748 residues: Putative transmembrane protein ORF88 (748 aa).

Residues 1–20 form the signal peptide; it reads MIIMKSIILLLAWFLTKTQA. The Extracellular portion of the chain corresponds to 21-723; the sequence is NMLTESLYLS…LNLAPFKTLS (703 aa). Residues N55, N78, N99, N152, N189, N390, N467, and N499 are each glycosylated (N-linked (GlcNAc...) asparagine; by host). The tract at residues 531–574 is disordered; it reads LTFDSPPPPPTTTQAPPPPPTTTQAPPPPPTTTQAPPPPIVINT. Positions 535–570 are enriched in pro residues; that stretch reads SPPPPPTTTQAPPPPPTTTQAPPPPPTTTQAPPPPI. N-linked (GlcNAc...) asparagine; by host glycans are attached at residues N573, N584, N599, N612, and N617. The disordered stretch occupies residues 650–680; the sequence is PSIGRAPIPPPDVPVEPPRSIPTTNAPSPEE. A compositionally biased stretch (pro residues) spans 656 to 669; it reads PIPPPDVPVEPPRS. A helical transmembrane segment spans residues 724-744; it reads YAGIGVVSFALLFTILVVCLI. The Cytoplasmic segment spans residues 745-748; sequence KFSI.

It is found in the host membrane. This Magallana gigas (Pacific oyster) protein is Putative transmembrane protein ORF88.